Reading from the N-terminus, the 163-residue chain is MNDSPKKVLIYTDGACSGNPGSGGYGTVLIYNNHRKELSGGFRLTTNNRMEMMAAIVGLETLTIKCAVTLYTDSRYLVDAITKGWAKKWKANGWKRNAKENAKNPDLWEKLLDLCSQHEVDFVWVKGHAGHQENEYCDRLAVRASQQTNLPSDEVYENKGIET.

An RNase H type-1 domain is found at 4–146; the sequence is SPKKVLIYTD…CDRLAVRASQ (143 aa). Mg(2+)-binding residues include aspartate 13, glutamate 51, aspartate 73, and aspartate 138.

This sequence belongs to the RNase H family. Monomer. Mg(2+) is required as a cofactor.

The protein resides in the cytoplasm. The enzyme catalyses Endonucleolytic cleavage to 5'-phosphomonoester.. Its function is as follows. Endonuclease that specifically degrades the RNA of RNA-DNA hybrids. The protein is Ribonuclease H of Rippkaea orientalis (strain PCC 8801 / RF-1) (Cyanothece sp. (strain PCC 8801)).